A 210-amino-acid polypeptide reads, in one-letter code: Large ribosomal subunit protein uL4 (210 aa).

A disordered region spans residues Gln46–Ser77.

The protein belongs to the universal ribosomal protein uL4 family. In terms of assembly, part of the 50S ribosomal subunit.

In terms of biological role, one of the primary rRNA binding proteins, this protein initially binds near the 5'-end of the 23S rRNA. It is important during the early stages of 50S assembly. It makes multiple contacts with different domains of the 23S rRNA in the assembled 50S subunit and ribosome. Forms part of the polypeptide exit tunnel. The chain is Large ribosomal subunit protein uL4 from Amoebophilus asiaticus (strain 5a2).